The following is a 1895-amino-acid chain: 1,3-beta-glucan synthase component GSC2 (1895 aa).

Composition is skewed to polar residues over residues 1-16 (MSYN…YSNG) and 25-34 (PTYQVTQDQS). Disordered regions lie at residues 1 to 143 (MSYN…PYGN) and 269 to 292 (ARKA…EETL). Topologically, residues 1 to 473 (MSYNDPNLNG…WLHLVTNFNR (473 aa)) are extracellular. Low complexity predominate over residues 65 to 78 (QFPQGQDPSQDQGP). Composition is skewed to polar residues over residues 79–107 (YNND…SDFS) and 115–141 (TYPN…STPY). Over residues 269–278 (ARKAKKKNKK) the composition is skewed to basic residues. A Glycyl lysine isopeptide (Lys-Gly) (interchain with G-Cter in ubiquitin) cross-link involves residue lysine 278. Threonine 288 and threonine 291 each carry phosphothreonine. Lysine 405 participates in a covalent cross-link: Glycyl lysine isopeptide (Lys-Gly) (interchain with G-Cter in ubiquitin). A helical transmembrane segment spans residues 474–494 (IWIMHISVYWMYCAYNAPTFY). Over 495–511 (THNYQQLVDNQPLAAYK) the chain is Cytoplasmic. The chain crosses the membrane as a helical span at residues 512-532 (WATAALGGTVASLIQVAATLC). Residues 533–550 (EWSFVPRKWAGAQHLSRR) are Extracellular-facing. The chain crosses the membrane as a helical span at residues 551-571 (FWFLCVIMGINLGPVIFVFAY). The Cytoplasmic portion of the chain corresponds to 572-582 (DKDTVYSTAAH). Residues 583–603 (VVGAVMFFVAVATLVFFSVMP) form a helical membrane-spanning segment. Residues 604 to 1579 (LGGLFTSYMK…DASRAHRTNL (976 aa)) lie on the Extracellular side of the membrane. Glycyl lysine isopeptide (Lys-Gly) (interchain with G-Cter in ubiquitin) cross-links involve residues lysine 929, lysine 934, lysine 1558, and lysine 1566. A helical transmembrane segment spans residues 1580–1600 (IMAEIIPCAIYAAGCFIAFTF). Topologically, residues 1601-1620 (INAQTGVKTTDEDRVNSTLR) are cytoplasmic. The helical transmembrane segment at 1621-1641 (IIICTLAPIVIDIGVLFFCMG) threads the bilayer. The Extracellular segment spans residues 1642-1758 (LSCCSGPLLG…LTAKVIELSE (117 aa)). The helical transmembrane segment at 1759 to 1779 (FAADFVLGHVILIFQLPVICI) threads the bilayer. The Cytoplasmic segment spans residues 1780–1821 (PKIDKFHSIMLFWLKPSRQIRPPIYSLKQARLRKRMVRRYCS). The helical transmembrane segment at 1822–1842 (LYFLVLIIFAGCIVGPAVASA) threads the bilayer. Residues 1843–1895 (HVPKDLGSGLTGTFHNLVQPRNVSNNDTGSQMSTYKSHYYTHTPSLKTWSTIK) are Extracellular-facing.

The protein belongs to the glycosyltransferase 48 family. Component of the 1,3-beta-glucan synthase (GS) complex, composed of two alternate catalytic subunits FKS1 or GSC2, and a regulatory subunit RHO1. Interacts with SMK1.

Its subcellular location is the membrane. The enzyme catalyses [(1-&gt;3)-beta-D-glucosyl](n) + UDP-alpha-D-glucose = [(1-&gt;3)-beta-D-glucosyl](n+1) + UDP + H(+). Alternate catalytic subunit of the 1,3-beta-glucan synthase (GS) complex. Synthesizes 1,3-beta-glucan, a major structural component of the yeast cell wall. Required for spore wall assembly. Negative regulation of activity by SMK1 is important for spore wall deposition. Activity is positively regulated by RHO1. This is 1,3-beta-glucan synthase component GSC2 from Saccharomyces cerevisiae (strain ATCC 204508 / S288c) (Baker's yeast).